A 349-amino-acid polypeptide reads, in one-letter code: MKRWSIITGIVIIFCILTCKGQVENKKVDFRTEKGKFVPLNLVPGDVVEYSCPYSLNNDIRNMNGVEREHFDNKKFCFDYIFVGSKLTFLKEYVRGSYNVVHKEEGNLYTSQFSVPPVVLTHRNFDCFCYMEENNVVVKKVLRIHISNGVLRKIPGCDFNADYKESTAITTFSNMSPRRVKVCDVYPKSGDFISLMCPSDYSIKPDGCFSNVYVKRYPNEEVKEEDRFNLNRKWDASKYNVVSIETVLKMNMITQGDKYSIFSKLPDVKDQVDFTCICQSNDEQDNLMMNVYINNTSYLTNNTRSIGVNKHSFSNSEIFERIEREEISFAFSSYLSITLILLYLFFLNF.

Residues 1–21 form the signal peptide; that stretch reads MKRWSIITGIVIIFCILTCKG. 6-Cys domains follow at residues 22-149 and 153-301; these read QVEN…ISNG and KIPG…YLTN. Cystine bridges form between cysteine 77/cysteine 127, cysteine 157/cysteine 183, cysteine 197/cysteine 278, and cysteine 208/cysteine 276. Residues asparagine 294, asparagine 295, and asparagine 301 are each glycosylated (N-linked (GlcNAc...) asparagine). The GPI-anchor amidated asparagine moiety is linked to residue asparagine 315. A propeptide spans 316-349 (removed in mature form); that stretch reads SEIFERIEREEISFAFSSYLSITLILLYLFFLNF.

It is found in the cell surface. Its subcellular location is the cell membrane. This Plasmodium falciparum (isolate 3D7) protein is Merozoite surface protein P38 (PFS38).